The chain runs to 353 residues: Protein RecA (353 aa).

Residue 68–75 (GPESSGKT) coordinates ATP.

The protein belongs to the RecA family.

The protein resides in the cytoplasm. Functionally, can catalyze the hydrolysis of ATP in the presence of single-stranded DNA, the ATP-dependent uptake of single-stranded DNA by duplex DNA, and the ATP-dependent hybridization of homologous single-stranded DNAs. It interacts with LexA causing its activation and leading to its autocatalytic cleavage. This Roseiflexus sp. (strain RS-1) protein is Protein RecA.